The sequence spans 554 residues: Glucose-6-phosphate isomerase (554 aa).

The active-site Proton donor is E358. Catalysis depends on residues H389 and K515. A compositionally biased stretch (polar residues) spans 527 to 540 (ANNSPAPQSDSSTD). The interval 527–554 (ANNSPAPQSDSSTDALVRRYRSERGRTS) is disordered. The span at 542–554 (LVRRYRSERGRTS) shows a compositional bias: basic and acidic residues.

Belongs to the GPI family.

Its subcellular location is the cytoplasm. The enzyme catalyses alpha-D-glucose 6-phosphate = beta-D-fructose 6-phosphate. The protein operates within carbohydrate biosynthesis; gluconeogenesis. It participates in carbohydrate degradation; glycolysis; D-glyceraldehyde 3-phosphate and glycerone phosphate from D-glucose: step 2/4. Its function is as follows. Catalyzes the reversible isomerization of glucose-6-phosphate to fructose-6-phosphate. The polypeptide is Glucose-6-phosphate isomerase (Mycolicibacterium paratuberculosis (strain ATCC BAA-968 / K-10) (Mycobacterium paratuberculosis)).